The sequence spans 156 residues: Rhombotin-1 (156 aa).

2 consecutive LIM zinc-binding domains span residues K22–T84 and G86–N148.

In terms of tissue distribution, expressed in the brain and not in the thymus.

The protein resides in the nucleus. Its function is as follows. May be involved in gene regulation within neural lineage cells potentially by direct DNA binding or by binding to other transcription factors. The protein is Rhombotin-1 (LMO1) of Bos taurus (Bovine).